Consider the following 847-residue polypeptide: Alanine--tRNA ligase (847 aa).

Positions 554, 558, 656, and 660 each coordinate Zn(2+).

This sequence belongs to the class-II aminoacyl-tRNA synthetase family. Zn(2+) serves as cofactor.

The protein localises to the cytoplasm. The enzyme catalyses tRNA(Ala) + L-alanine + ATP = L-alanyl-tRNA(Ala) + AMP + diphosphate. In terms of biological role, catalyzes the attachment of alanine to tRNA(Ala) in a two-step reaction: alanine is first activated by ATP to form Ala-AMP and then transferred to the acceptor end of tRNA(Ala). Also edits incorrectly charged Ser-tRNA(Ala) and Gly-tRNA(Ala) via its editing domain. The chain is Alanine--tRNA ligase from Helicobacter pylori (strain Shi470).